A 374-amino-acid chain; its full sequence is Flagellar P-ring protein (374 aa).

Residues Met1–Ala29 form the signal peptide.

This sequence belongs to the FlgI family. As to quaternary structure, the basal body constitutes a major portion of the flagellar organelle and consists of four rings (L,P,S, and M) mounted on a central rod.

It localises to the periplasm. Its subcellular location is the bacterial flagellum basal body. Assembles around the rod to form the L-ring and probably protects the motor/basal body from shearing forces during rotation. This chain is Flagellar P-ring protein, found in Nitrobacter hamburgensis (strain DSM 10229 / NCIMB 13809 / X14).